A 245-amino-acid polypeptide reads, in one-letter code: Superoxide dismutase [Mn], mitochondrial (245 aa).

The N-terminal 32 residues, 1 to 32, are a transit peptide targeting the mitochondrion; that stretch reads MVNLGSIWQNLLASQAPLQSMTGNATTMAGLA. Residues His-58, His-106, Asp-196, and His-200 each coordinate Mn(2+).

The protein belongs to the iron/manganese superoxide dismutase family. In terms of assembly, homotetramer. It depends on Mn(2+) as a cofactor.

Its subcellular location is the mitochondrion matrix. The catalysed reaction is 2 superoxide + 2 H(+) = H2O2 + O2. Functionally, destroys superoxide anion radicals which are normally produced within the cells and which are toxic to biological systems. In Neurospora crassa (strain ATCC 24698 / 74-OR23-1A / CBS 708.71 / DSM 1257 / FGSC 987), this protein is Superoxide dismutase [Mn], mitochondrial (sod-2).